Reading from the N-terminus, the 674-residue chain is MLRGDSAAKIQERYAELQKRKSHPTSCISTAFTNVATLCRKRYQMMHPELGLAHSCNEAFLPLMAFCGRHRDYNSPEESQRELLFHERLKSALDKLTFRPCSEEQRASYQKLDALTELYRDPQFQQINNFMTDFKKWLDGGFSTAVEGDAKAIRLEPFQKNLLIHVIFFIAVTKIPVLANRVLQYLIHAFQIDFLSQTSIDIFKQKATVFLVPRRHGKTWFIIPIISFLLKHMIGISIGYVAHQKHVSQFVLKEVEFRCRHTFARDYVVENKDNVISIDHRGAKSTALFASCYNTNSIRGQNFHLLLVDEAHFIKKEAFNTILGFLAQNTTKIIFISSTNTTSDSTCFLTRLNNAPFDMLNVVSYVCEEHLHSFTEKGDATACPCYRLHKPTFISLNSQVRKTANMFMPGAFMDEIIGGTNKISQNTVLITDQSREEFDILRYSTLNTNAYDYFGKTLYVYLDPAFTTNRKASGTGVAAVGAYRHQFLIYGLEHFFLRDLSESSEVAIAECAAHMIISVLSLHPYLDELRIAVEGNTNQAAAVRIACLIRQSVQSSTLIRVLFYHTPDQNHIEQPFYLMGRDKALAVEQFISRFNSGYIKASQELVSYTIKLSHDPIEYLLEQIQNLHRVTLAEGTTARYSAKRQNRISDDLIIAVIMATYLCDDIHAIRFRVS.

The Walker A motif signature appears at 212 to 219 (VPRRHGKT). Positions 305–310 (LLLVDE) match the Walker B motif motif. The active-site For ATPase activity is E310. Catalysis depends on for nuclease activity residues D463 and E534. Residues 580–600 (GRDKALAVEQFISRFNSGYIK) are required for interaction with UL56 and DNA packaging. Residue D651 is the For nuclease activity of the active site.

Belongs to the herpesviridae TRM3 protein family. Interacts with the terminase subunits TRM1 and TRM2. Interacts with portal protein.

Its subcellular location is the host nucleus. In terms of biological role, component of the molecular motor that translocates viral genomic DNA in empty capsid during DNA packaging. Forms a tripartite terminase complex together with TRM1 and TRM2 in the host cytoplasm. Once the complex reaches the host nucleus, it interacts with the capsid portal vertex. This portal forms a ring in which genomic DNA is translocated into the capsid. TRM3 carries an RNase H-like nuclease activity that plays an important role for the cleavage of concatemeric viral DNA into unit length genomes. This Homo sapiens (Human) protein is Tripartite terminase subunit 3.